Here is a 340-residue protein sequence, read N- to C-terminus: Replication factor C subunit 2 (340 aa).

59–66 (GSPGTGKT) provides a ligand contact to ATP.

The protein belongs to the activator 1 small subunits family. In terms of assembly, heteropentamer of subunits rfc1, rfc2, rfc3, rfc4 and rfc5 that forms a complex (RFC) with PCNA in the presence of ATP. Two other complexes exist where rfc1 can be replaced by either ctf18 or elg1 to form the ctf18-RFC or the elg1-RFC complexes respectively.

The protein localises to the nucleus. The elongation of primed DNA templates by DNA polymerase delta and epsilon requires the action of the accessory proteins PCNA and activator 1. Subunit 2 binds ATP and single-stranded DNA. The protein is Replication factor C subunit 2 (rfc2) of Schizosaccharomyces pombe (strain 972 / ATCC 24843) (Fission yeast).